A 941-amino-acid polypeptide reads, in one-letter code: Glycine dehydrogenase (decarboxylating) (941 aa).

N6-(pyridoxal phosphate)lysine is present on lysine 692.

This sequence belongs to the GcvP family. The glycine cleavage system is composed of four proteins: P, T, L and H. The cofactor is pyridoxal 5'-phosphate.

The catalysed reaction is N(6)-[(R)-lipoyl]-L-lysyl-[glycine-cleavage complex H protein] + glycine + H(+) = N(6)-[(R)-S(8)-aminomethyldihydrolipoyl]-L-lysyl-[glycine-cleavage complex H protein] + CO2. In terms of biological role, the glycine cleavage system catalyzes the degradation of glycine. The P protein binds the alpha-amino group of glycine through its pyridoxal phosphate cofactor; CO(2) is released and the remaining methylamine moiety is then transferred to the lipoamide cofactor of the H protein. The chain is Glycine dehydrogenase (decarboxylating) from Mycobacterium tuberculosis (strain ATCC 25177 / H37Ra).